Consider the following 196-residue polypeptide: MMGPEIERLVGLMARLPGLGPRSARRIVLRLMAEREQRLLPLIAALDAACQRVAVCPVCGGLDSQQPCMICADAAREPLICVVETVADQWALERAAVYRGRYHVLGGLLSAIAGHGPEDLGIDRLVARLDGSVREVILALPATVDGQATAHYLTERLATCGVSVTRLAQGVPVGGSIEILDEGTLALALSARRAAG.

Residues 56 to 71 (CPVCGGLDSQQPCMIC) form a C4-type zinc finger. The region spanning 78-172 (PLICVVETVA…SVTRLAQGVP (95 aa)) is the Toprim domain.

It belongs to the RecR family.

Its function is as follows. May play a role in DNA repair. It seems to be involved in an RecBC-independent recombinational process of DNA repair. It may act with RecF and RecO. The polypeptide is Recombination protein RecR (Acidiphilium cryptum (strain JF-5)).